We begin with the raw amino-acid sequence, 393 residues long: Methylthioribose kinase (393 aa).

Residues asparagine 38, lysine 53, and 107–109 contribute to the ATP site; that span reads EDL. Aspartate 225 lines the substrate pocket. 242 to 244 lines the ATP pocket; that stretch reads DPE. Arginine 332 contributes to the substrate binding site.

The protein belongs to the methylthioribose kinase family. In terms of assembly, homodimer.

The catalysed reaction is 5-(methylsulfanyl)-D-ribose + ATP = 5-(methylsulfanyl)-alpha-D-ribose 1-phosphate + ADP + H(+). The protein operates within amino-acid biosynthesis; L-methionine biosynthesis via salvage pathway; S-methyl-5-thio-alpha-D-ribose 1-phosphate from S-methyl-5'-thioadenosine (hydrolase route): step 2/2. Its function is as follows. Catalyzes the phosphorylation of methylthioribose into methylthioribose-1-phosphate. In Bacillus cereus (strain AH187), this protein is Methylthioribose kinase.